Consider the following 427-residue polypeptide: Adenylosuccinate synthetase (427 aa).

GTP contacts are provided by residues 13 to 19 (GDEGKGK) and 41 to 43 (GHT). The active-site Proton acceptor is Asp14. Mg(2+) contacts are provided by Asp14 and Gly41. Residues 14–17 (DEGK), 39–42 (NAGH), Thr129, Arg143, Gln224, Thr239, and Arg303 each bind IMP. The active-site Proton donor is the His42. The tract at residues 117–137 (QEKQRGEESLGTTKRGIGPAY) is disordered. 299 to 305 (TTTGRPR) provides a ligand contact to substrate. GTP contacts are provided by residues Arg305, 331 to 333 (KLD), and 414 to 416 (GTG).

Belongs to the adenylosuccinate synthetase family. As to quaternary structure, homodimer. The cofactor is Mg(2+).

It localises to the cytoplasm. It carries out the reaction IMP + L-aspartate + GTP = N(6)-(1,2-dicarboxyethyl)-AMP + GDP + phosphate + 2 H(+). Its pathway is purine metabolism; AMP biosynthesis via de novo pathway; AMP from IMP: step 1/2. Functionally, plays an important role in the de novo pathway of purine nucleotide biosynthesis. Catalyzes the first committed step in the biosynthesis of AMP from IMP. The sequence is that of Adenylosuccinate synthetase from Caldicellulosiruptor saccharolyticus (strain ATCC 43494 / DSM 8903 / Tp8T 6331).